The primary structure comprises 266 residues: 3-methyl-2-oxobutanoate hydroxymethyltransferase (266 aa).

2 residues coordinate Mg(2+): Asp-43 and Asp-82. 3-methyl-2-oxobutanoate-binding positions include 43-44 (DS), Asp-82, and Lys-110. Mg(2+) is bound at residue Glu-112. The active-site Proton acceptor is Glu-179.

This sequence belongs to the PanB family. As to quaternary structure, homodecamer; pentamer of dimers. Mg(2+) is required as a cofactor.

Its subcellular location is the cytoplasm. The catalysed reaction is 3-methyl-2-oxobutanoate + (6R)-5,10-methylene-5,6,7,8-tetrahydrofolate + H2O = 2-dehydropantoate + (6S)-5,6,7,8-tetrahydrofolate. It functions in the pathway cofactor biosynthesis; (R)-pantothenate biosynthesis; (R)-pantoate from 3-methyl-2-oxobutanoate: step 1/2. Functionally, catalyzes the reversible reaction in which hydroxymethyl group from 5,10-methylenetetrahydrofolate is transferred onto alpha-ketoisovalerate to form ketopantoate. The chain is 3-methyl-2-oxobutanoate hydroxymethyltransferase from Psychrobacter cryohalolentis (strain ATCC BAA-1226 / DSM 17306 / VKM B-2378 / K5).